Reading from the N-terminus, the 1213-residue chain is A disintegrin and metalloproteinase with thrombospondin motifs 19 (1213 aa).

The signal sequence occupies residues 1-27; sequence MGKNREMRLTHICCCCLLYQLGFLSNG. Residues 28–322 constitute a propeptide that is removed on maturation; that stretch reads IVSELQFAPD…KIAESGRGKR (295 aa). 2 disordered regions span residues 49 to 161 and 192 to 215; these read WRRE…PPPA and FLAP…AASA. The span at 52–71 shows a compositional bias: gly residues; it reads EPVDPAGGSGGSADPGWVRG. Residues 110–119 show a composition bias toward acidic residues; sequence RPPPPSEGEE. Residues 120–139 are compositionally biased toward low complexity; it reads DEELESQELPRGSSGAAALS. Residues 140–155 show a composition bias toward pro residues; it reads PGAPASWQPPPPPQPP. The N-linked (GlcNAc...) asparagine glycan is linked to Asn-266. The Cysteine switch motif lies at 298–305; sequence HYCGIISD. Cys-300 contacts Zn(2+). The 221-residue stretch at 331–551 folds into the Peptidase M12B domain; sequence YNIETVVVAD…KASNCLLQTN (221 aa). Intrachain disulfides connect Cys-407–Cys-472, Cys-447–Cys-454, Cys-466–Cys-546, Cys-505–Cys-530, Cys-575–Cys-599, Cys-586–Cys-607, Cys-594–Cys-626, Cys-620–Cys-631, Cys-651–Cys-686, Cys-655–Cys-691, and Cys-666–Cys-676. His-488 lines the Zn(2+) pocket. The active site involves Glu-489. 2 residues coordinate Zn(2+): His-492 and His-498. The region spanning 552–639 is the Disintegrin domain; sequence PQSVNSVMVP…ECTSRTSAPE (88 aa). Positions 640-692 constitute a TSP type-1 1 domain; the sequence is HLAGEWSLWSPCSRTCSAGISSRERKCPGLDSEARDCNGPRKQYRICENPPCP. A spacer region spans residues 797 to 920; it reads IIKGDFNHTR…PENQSSKAPE (124 aa). Asn-803, Asn-913, Asn-955, and Asn-1015 each carry an N-linked (GlcNAc...) asparagine glycan. TSP type-1 domains are found at residues 921–981, 982–1043, 1045–1089, and 1093–1150; these read PLFM…NEQP, CQTR…QDCM, VWEA…EDCE, and KCYV…QPCN. Cystine bridges form between Cys-994/Cys-1037, Cys-998/Cys-1042, and Cys-1009/Cys-1026. Residues 1166–1205 form the PLAC domain; sequence LTFKCLGDQWPVYCRVIREKNLCQDMRWYQRCCETCRDFY.

Zn(2+) serves as cofactor. In terms of processing, the precursor is cleaved by a furin endopeptidase. Post-translationally, glycosylated. Can be O-fucosylated by POFUT2 on a serine or a threonine residue found within the consensus sequence C1-X(2)-(S/T)-C2-G of the TSP type-1 repeat domains where C1 and C2 are the first and second cysteine residue of the repeat, respectively. Fucosylated repeats can then be further glycosylated by the addition of a beta-1,3-glucose residue by the glucosyltransferase, B3GALTL. Fucosylation mediates the efficient secretion of ADAMTS family members. Can also be C-glycosylated with one or two mannose molecules on tryptophan residues within the consensus sequence W-X-X-W of the TPRs, and N-glycosylated. These other glycosylations can also facilitate secretion. As to expression, expressed in fetal lung, but not in any adult tissues examined. Expression was detected in an osteosarcoma cDNA library.

Its subcellular location is the secreted. The protein resides in the extracellular space. The protein localises to the extracellular matrix. This is A disintegrin and metalloproteinase with thrombospondin motifs 19 (ADAMTS19) from Homo sapiens (Human).